A 360-amino-acid chain; its full sequence is DNA replication and repair protein RecF (360 aa).

Position 30–37 (30–37) interacts with ATP; the sequence is GHNGSGKT.

The protein belongs to the RecF family.

Its subcellular location is the cytoplasm. Functionally, the RecF protein is involved in DNA metabolism; it is required for DNA replication and normal SOS inducibility. RecF binds preferentially to single-stranded, linear DNA. It also seems to bind ATP. The polypeptide is DNA replication and repair protein RecF (Shewanella sediminis (strain HAW-EB3)).